Here is an 83-residue protein sequence, read N- to C-terminus: MYKATVIIKLKKGVLNPEGRTIQRALNFLGFNNVKEVQTYKMIDIIMEGENEEKVKEEVEEMCKKLLANPVIHDYEIKVEKIE.

It belongs to the PurS family. Homodimer. Part of the FGAM synthase complex composed of 1 PurL, 1 PurQ and 2 PurS subunits.

The protein localises to the cytoplasm. It catalyses the reaction N(2)-formyl-N(1)-(5-phospho-beta-D-ribosyl)glycinamide + L-glutamine + ATP + H2O = 2-formamido-N(1)-(5-O-phospho-beta-D-ribosyl)acetamidine + L-glutamate + ADP + phosphate + H(+). Its pathway is purine metabolism; IMP biosynthesis via de novo pathway; 5-amino-1-(5-phospho-D-ribosyl)imidazole from N(2)-formyl-N(1)-(5-phospho-D-ribosyl)glycinamide: step 1/2. Its function is as follows. Part of the phosphoribosylformylglycinamidine synthase complex involved in the purines biosynthetic pathway. Catalyzes the ATP-dependent conversion of formylglycinamide ribonucleotide (FGAR) and glutamine to yield formylglycinamidine ribonucleotide (FGAM) and glutamate. The FGAM synthase complex is composed of three subunits. PurQ produces an ammonia molecule by converting glutamine to glutamate. PurL transfers the ammonia molecule to FGAR to form FGAM in an ATP-dependent manner. PurS interacts with PurQ and PurL and is thought to assist in the transfer of the ammonia molecule from PurQ to PurL. This is Phosphoribosylformylglycinamidine synthase subunit PurS from Methanocaldococcus jannaschii (strain ATCC 43067 / DSM 2661 / JAL-1 / JCM 10045 / NBRC 100440) (Methanococcus jannaschii).